Here is a 44-residue protein sequence, read N- to C-terminus: Cytochrome b559 subunit beta (44 aa).

Residues 19–35 (WLAIHGIAIPTVFFLGA) traverse the membrane as a helical segment. Residue H23 coordinates heme.

Belongs to the PsbE/PsbF family. In terms of assembly, heterodimer of an alpha subunit and a beta subunit. PSII is composed of 1 copy each of membrane proteins PsbA, PsbB, PsbC, PsbD, PsbE, PsbF, PsbH, PsbI, PsbJ, PsbK, PsbL, PsbM, PsbT, PsbX, PsbY, PsbZ, Psb30/Ycf12, at least 3 peripheral proteins of the oxygen-evolving complex and a large number of cofactors. It forms dimeric complexes. It depends on heme b as a cofactor.

Its subcellular location is the plastid. The protein localises to the chloroplast thylakoid membrane. Its function is as follows. This b-type cytochrome is tightly associated with the reaction center of photosystem II (PSII). PSII is a light-driven water:plastoquinone oxidoreductase that uses light energy to abstract electrons from H(2)O, generating O(2) and a proton gradient subsequently used for ATP formation. It consists of a core antenna complex that captures photons, and an electron transfer chain that converts photonic excitation into a charge separation. The polypeptide is Cytochrome b559 subunit beta (Gracilaria tenuistipitata var. liui (Red alga)).